The primary structure comprises 282 residues: Bifunctional protein FolD (282 aa).

Residues 165–167, Ser-190, and Ile-231 contribute to the NADP(+) site; that span reads NRS.

Belongs to the tetrahydrofolate dehydrogenase/cyclohydrolase family. As to quaternary structure, homodimer.

It carries out the reaction (6R)-5,10-methylene-5,6,7,8-tetrahydrofolate + NADP(+) = (6R)-5,10-methenyltetrahydrofolate + NADPH. It catalyses the reaction (6R)-5,10-methenyltetrahydrofolate + H2O = (6R)-10-formyltetrahydrofolate + H(+). It functions in the pathway one-carbon metabolism; tetrahydrofolate interconversion. In terms of biological role, catalyzes the oxidation of 5,10-methylenetetrahydrofolate to 5,10-methenyltetrahydrofolate and then the hydrolysis of 5,10-methenyltetrahydrofolate to 10-formyltetrahydrofolate. The sequence is that of Bifunctional protein FolD from Clostridium botulinum (strain Okra / Type B1).